A 100-amino-acid polypeptide reads, in one-letter code: Defensin-6 (100 aa).

Residues 1–19 form the signal peptide; the sequence is MRTLTILTAVLLVALQAKA. Positions 20–68 are excised as a propeptide; it reads EPLQAEDDPLQAKAYEADAQEQRGANDQDFAVSFAEDASSSLRALGSTR. Cystine bridges form between C72-C99, C74-C88, and C78-C98.

It belongs to the alpha-defensin family. Homodimer. Self-assembles into higher-order oligomers termed nanonets, fibril-like structures that entrap microbes. Self-assembly into nanonets seems to protect against proteolytic digestion in duodenal fluid. Interacts with Y.enterocolitica invasin and S.typhimurium fliC/flagellin; the interaction creates an anchoring site for progressive DEFA6 self-assembly into nanonets. Proteolytically cleaved by trypsin at Arg-68; the propeptide is stored in the tissue of the small intestine and the mature peptide is found in the luminal fluid; cleavage may occur during or after release into the lumen. The N-terminal propeptide region suppresses self-assembly and renders DEFA6 propeptide unable to agglutinate bacteria and protect human epithelial cells from bacterial invasion. In terms of processing, under reducing conditions, naturally present in the gut owing to the low redox potential or enzymatically generated by the thioredoxin system, the disulfide bridges are opened leading to a conformational change of DEF6, thereby changing its antimicrobial spectrum. The reduced form exhibits inhibitory activity against anaerobic bacteria, in contrast to the minimal antimicrobial activity of the disulfide-linked oxidized form. The formation of higher-order nanonets and bacterial entrapment is independent of the redox state. In terms of tissue distribution, expressed in Paneth cells of the small intestine (at protein level).

It is found in the secreted. Its subcellular location is the cytoplasmic vesicle. The protein resides in the secretory vesicle. In terms of biological role, host-defense peptide that contributes to intestinal innate immunity and mediates homeostasis at mucosal surfaces by forming higher-order oligomers that capture bacteria and prevent microbial invasion of the epithelium. After binding to bacterial surface proteins, undergoes ordered self-assembly to form fibril-like nanonets that surround and entangle bacteria and thereby prevent bacterial invasion across the epithelial barrier. Entangles and agglutinates Gram-negative bacteria, such as E.coli, S.typhimurium and Y.enterocolitica, and Gram-positive bacteria such as L.monocytogenes, thereby protecting the intestine against invasion by enteric bacterial pathogens. Blocks adhesion of C.albicans to intestinal epithelial cells and thereby suppresses fungal invasion of epithelial cells and biofilm formation. Under reducing conditions and in an acidic environment similar to the intestinal milieu, exhibits inhibitory activity against anaerobic bacteria such as B.adolescentis, L.acidophilus and B.breve, as well as B.longum and S.thermophilus, possibly by leading to alterations in bacterial cell envelope structures. The disulfide-linked oxidized form exhibits negligible antimicrobial activity against Gram-negative and Gram-positive bacteria, as compared to the enteric defensin DEFA5. This Homo sapiens (Human) protein is Defensin-6 (DEFA6).